Consider the following 199-residue polypeptide: Golgi to ER traffic protein 1 (199 aa).

The Lumenal portion of the chain corresponds to 1-11 (MLLPDLHPYTI). The chain crosses the membrane as a helical span at residues 12 to 31 (LLSIFLVLVAKQLVATIGKS). Residues 32–115 (TIQEFVWLVY…SIDKASNALI (84 aa)) lie on the Cytoplasmic side of the membrane. A coiled-coil region spans residues 76-116 (YAKWTKLNRQADKLSAELQKLNQEIQQQKSSIDKASNALIL). Residues 116–136 (LVLTTLPIWIARVFYRKTHLF) form a helical membrane-spanning segment. At 137-160 (YIRQGIFPKYVEWVLALPFLPNGA) the chain is on the lumenal side. A helical membrane pass occupies residues 161 to 177 (VGLTIWMFAVNSVVSNF). The Cytoplasmic portion of the chain corresponds to 178-199 (SFLVSFPFAKRVSKPVRDTKVE).

This sequence belongs to the WRB/GET1 family. Component of the Golgi to ER traffic (GET) complex, which is composed of GET1, GET2 and GET3. Within the complex, GET1 and GET2 form a heterotetramer which is stabilized by phosphatidylinositol binding and which binds to the GET3 homodimer.

Its subcellular location is the endoplasmic reticulum membrane. It is found in the golgi apparatus membrane. Its function is as follows. Required for the post-translational delivery of tail-anchored (TA) proteins to the endoplasmic reticulum. Together with GET2, acts as a membrane receptor for soluble GET3, which recognizes and selectively binds the transmembrane domain of TA proteins in the cytosol. The GET complex cooperates with the HDEL receptor ERD2 to mediate the ATP-dependent retrieval of resident ER proteins that contain a C-terminal H-D-E-L retention signal from the Golgi to the ER. The polypeptide is Golgi to ER traffic protein 1 (Candida albicans (strain SC5314 / ATCC MYA-2876) (Yeast)).